We begin with the raw amino-acid sequence, 147 residues long: 3-hydroxyacyl-[acyl-carrier-protein] dehydratase FabZ (147 aa).

H48 is a catalytic residue.

This sequence belongs to the thioester dehydratase family. FabZ subfamily.

It is found in the cytoplasm. It carries out the reaction a (3R)-hydroxyacyl-[ACP] = a (2E)-enoyl-[ACP] + H2O. Functionally, involved in unsaturated fatty acids biosynthesis. Catalyzes the dehydration of short chain beta-hydroxyacyl-ACPs and long chain saturated and unsaturated beta-hydroxyacyl-ACPs. The chain is 3-hydroxyacyl-[acyl-carrier-protein] dehydratase FabZ from Aliarcobacter butzleri (strain RM4018) (Arcobacter butzleri).